We begin with the raw amino-acid sequence, 539 residues long: Probable transcription factor GLK2 (539 aa).

The tract at residues 86 to 218 (FASSPDDEPP…NSHGKRKVKV (133 aa)) is disordered. Composition is skewed to low complexity over residues 99–111 (SAPG…AAAG) and 121–130 (AAAAAAAAAA). Positions 144–161 (KKDDEERSSSLPEEKDAK) are enriched in basic and acidic residues. Positions 212–271 (GKRKVKVDWTPELHRRFVQAVEQLGIDKAVPSRILELMGIECLTRHNIASHLQKYRSHRK) constitute an HTH myb-type domain. The segment at residues 242–267 (PSRILELMGIECLTRHNIASHLQKYR) is a DNA-binding region (H-T-H motif).

Expressed in leaves.

It localises to the nucleus. Its function is as follows. Probable transcriptional activator that promotes chloroplast development. Acts as an activator of nuclear photosynthetic genes involved in chlorophyll biosynthesis, light harvesting, and electron transport. This is Probable transcription factor GLK2 (GLK2) from Oryza sativa subsp. japonica (Rice).